A 1235-amino-acid chain; its full sequence is Cullin-associated NEDD8-dissociated protein 2 (1235 aa).

Residue S2 is modified to N-acetylserine. 26 HEAT repeats span residues 2 to 39 (STGA…KDSI), 44 to 81 (DSER…KVKE), 83 to 119 (QVEN…ELPP), 129 to 167 (NVCR…RLGA), 171 to 208 (TFHA…ACST), 210 to 246 (LFVE…SVGR), 254 to 291 (AHLD…KCPK), 326 to 367 (TEDS…SRPD), 371 to 408 (DFHC…HTRP), 431 to 468 (AQVP…VLPG), 516 to 553 (PHLP…TLWP), 564 to 603 (PYVG…HLGD), 607 to 644 (DDLE…LRLD), 647 to 684 (PILA…SQGL), 689 to 726 (PAVR…TQPS), 730 to 769 (EVSG…TRPP), 771 to 812 (VEYS…ALSA), 856 to 893 (GPQR…GNLP), 895 to 930 (FLPF…DNLK), 932 to 965 (YVED…LVFV), 966 to 1002 (NPPY…DQPH), 1006 to 1043 (PLLK…NKPS), 1047 to 1083 (DLLD…DDGL), 1104 to 1140 (LDMC…LCPA), 1156 to 1193 (TCTA…NPEV), and 1203 to 1235 (SAQI…MELS). The disordered stretch occupies residues 314-345 (YDHDSDDEEQMETEDSEFSEQESEDEYSDDDD). Positions 317–345 (DSDDEEQMETEDSEFSEQESEDEYSDDDD) are enriched in acidic residues.

It belongs to the CAND family. Binds TBP, CNOT3 and UBE3C. Ubiquitinated and targeted for proteasomal degradation. Highly expressed in embryonic limb buds.

It is found in the nucleus. Its function is as follows. Probable assembly factor of SCF (SKP1-CUL1-F-box protein) E3 ubiquitin ligase complexes that promotes the exchange of the substrate-recognition F-box subunit in SCF complexes, thereby playing a key role in the cellular repertoire of SCF complexes. This is Cullin-associated NEDD8-dissociated protein 2 (Cand2) from Mus musculus (Mouse).